We begin with the raw amino-acid sequence, 86 residues long: Anti-adapter protein IraP (86 aa).

Positions 1–38 form a coiled coil; it reads MKNLIAELLVKLAQKEEEAKELTVQVEALEIVVTALLR.

This sequence belongs to the IraP family. As to quaternary structure, interacts with RssB.

It localises to the cytoplasm. Its function is as follows. Inhibits RpoS proteolysis by regulating RssB activity, thereby increasing the stability of the sigma stress factor RpoS especially during phosphate starvation, but also in stationary phase and during nitrogen starvation. Its effect on RpoS stability is due to its interaction with RssB, which probably blocks the interaction of RssB with RpoS, and the consequent delivery of the RssB-RpoS complex to the ClpXP protein degradation pathway. The polypeptide is Anti-adapter protein IraP (Klebsiella pneumoniae subsp. pneumoniae (strain ATCC 700721 / MGH 78578)).